We begin with the raw amino-acid sequence, 217 residues long: Uracil-DNA glycosylase (217 aa).

Catalysis depends on Asp62, which acts as the Proton acceptor.

It belongs to the uracil-DNA glycosylase (UDG) superfamily. UNG family.

The protein resides in the cytoplasm. The enzyme catalyses Hydrolyzes single-stranded DNA or mismatched double-stranded DNA and polynucleotides, releasing free uracil.. Functionally, excises uracil residues from the DNA which can arise as a result of misincorporation of dUMP residues by DNA polymerase or due to deamination of cytosine. This chain is Uracil-DNA glycosylase, found in Streptococcus sanguinis (strain SK36).